Consider the following 179-residue polypeptide: NAD(P)H-quinone oxidoreductase subunit I, chloroplastic (179 aa).

2 consecutive 4Fe-4S ferredoxin-type domains span residues 55–84 and 95–124; these read GRIHFEFDKCIACEVCVRVCPIDLPVVDWR and LNYSIDFGVCIFCGNCVEYCPTNCLSMTEE. Residues C64, C67, C70, C74, C104, C107, C110, and C114 each coordinate [4Fe-4S] cluster.

The protein belongs to the complex I 23 kDa subunit family. As to quaternary structure, NDH is composed of at least 16 different subunits, 5 of which are encoded in the nucleus. [4Fe-4S] cluster is required as a cofactor.

It is found in the plastid. It localises to the chloroplast thylakoid membrane. The catalysed reaction is a plastoquinone + NADH + (n+1) H(+)(in) = a plastoquinol + NAD(+) + n H(+)(out). It catalyses the reaction a plastoquinone + NADPH + (n+1) H(+)(in) = a plastoquinol + NADP(+) + n H(+)(out). Functionally, NDH shuttles electrons from NAD(P)H:plastoquinone, via FMN and iron-sulfur (Fe-S) centers, to quinones in the photosynthetic chain and possibly in a chloroplast respiratory chain. The immediate electron acceptor for the enzyme in this species is believed to be plastoquinone. Couples the redox reaction to proton translocation, and thus conserves the redox energy in a proton gradient. This is NAD(P)H-quinone oxidoreductase subunit I, chloroplastic from Acorus calamus (Sweet flag).